The primary structure comprises 88 residues: U1-hexatoxin-Iw1c (88 aa).

A signal peptide spans 1 to 17 (LKFVVLICLVIMASTSA). Gln-18 bears the Pyrrolidone carboxylic acid mark. 5 disulfides stabilise this stretch: Cys-20–Cys-31, Cys-25–Cys-39, Cys-30–Cys-65, Cys-49–Cys-73, and Cys-67–Cys-80. Residues 86-88 (RSE) constitute a propeptide that is removed on maturation.

This sequence belongs to the MIT-like AcTx family. As to expression, expressed by the venom gland.

Its subcellular location is the secreted. The chain is U1-hexatoxin-Iw1c from Illawarra wisharti (Illawarra funnel-web spider).